A 317-amino-acid chain; its full sequence is Acetyl-coenzyme A carboxylase carboxyl transferase subunit alpha (317 aa).

Positions 40–293 (LEKRSADALK…GDIIAASLRS (254 aa)) constitute a CoA carboxyltransferase C-terminal domain.

It belongs to the AccA family. Acetyl-CoA carboxylase is a heterohexamer composed of biotin carboxyl carrier protein (AccB), biotin carboxylase (AccC) and two subunits each of ACCase subunit alpha (AccA) and ACCase subunit beta (AccD).

The protein resides in the cytoplasm. The catalysed reaction is N(6)-carboxybiotinyl-L-lysyl-[protein] + acetyl-CoA = N(6)-biotinyl-L-lysyl-[protein] + malonyl-CoA. The protein operates within lipid metabolism; malonyl-CoA biosynthesis; malonyl-CoA from acetyl-CoA: step 1/1. Component of the acetyl coenzyme A carboxylase (ACC) complex. First, biotin carboxylase catalyzes the carboxylation of biotin on its carrier protein (BCCP) and then the CO(2) group is transferred by the carboxyltransferase to acetyl-CoA to form malonyl-CoA. The sequence is that of Acetyl-coenzyme A carboxylase carboxyl transferase subunit alpha from Brucella abortus (strain S19).